The chain runs to 1207 residues: DNA-directed RNA polymerase subunit beta' (1207 aa).

Zn(2+) is bound by residues Cys60, Cys62, Cys75, and Cys78. Mg(2+)-binding residues include Asp450, Asp452, and Asp454. Residues Cys819, Cys893, Cys900, and Cys903 each coordinate Zn(2+).

The protein belongs to the RNA polymerase beta' chain family. As to quaternary structure, the RNAP catalytic core consists of 2 alpha, 1 beta, 1 beta' and 1 omega subunit. When a sigma factor is associated with the core the holoenzyme is formed, which can initiate transcription. The cofactor is Mg(2+). Zn(2+) serves as cofactor.

It catalyses the reaction RNA(n) + a ribonucleoside 5'-triphosphate = RNA(n+1) + diphosphate. Its function is as follows. DNA-dependent RNA polymerase catalyzes the transcription of DNA into RNA using the four ribonucleoside triphosphates as substrates. This is DNA-directed RNA polymerase subunit beta' from Streptococcus pyogenes serotype M3 (strain SSI-1).